The primary structure comprises 2729 residues: MAAHGQTSKRGNNTLLLFGALVQSHDVSTLRSMRESIVVQHGEHSWLVDSIKALPQDFEAALPHLPFFDQATTTTIHQLLVDAVSSFLTGSFETLVSPLPAALLIPLAVATQLAHYVEYSRQSPTGLAEGKEALGFCTGILSAFAVASSHDVCDLAKYGAAAMRLGMLVGLVVDCEDAAAGQGRYRSVSAGWDSEEKHAAMLKIVQSFEEAYVSVHFDKNRATITTSPGTISNLTRQLQKEGLVASDMGLLGRFHFAGSTKPREVTVDQLVSFCNSPAGALFRLPDADSLRLATRINDRDGGLITQGSLHEHALQSILVKLAAWFETFSSATTTQANTGAQNGRARPQIVDFGPQNSVPHSLASTVDINSGNGKTRRVKPADAQSSANSTHTRPWLDTDIAIVGMSCKVPGAENLEEFWDLLVSGKSQHQEISGQEGGRFDFGDTAFRTAADQRRRWFANLVSNHDQFDHRFFKKSARESASMDPQQRHILQVAYQAVEGSGYFNKSSSSTPTNANIGCYVGLCLGDYESNVASHPATAFTATGNLQGFVSGKVSHYFGWTGPAVTVNTACSSSLVAVHLACQAILSGECEAALAGGSHIMTSATWFQNLAGGSFLSPTGACKPFDSKADGYCRGEGVGAVFLKRMSQAMADGDMVLGVVAATGVQQNQNCTPIFVPNAPSLENLFSRVMTKARVKPADISVVEGHGTGTAVGDPAEYDAIRKALGGTTHRSADKPLMLSSVKGLVGHMECTSGVIGMIKLLLMMNKGALPPQASFQSINPALGATPADHMFIPTRPQPWVVPAGGFRAALLNNYGASGSNASAVLVQSPSMSFRPEITVGSRPAAGIKFPFWLAAFDKKSLSRYVKALRKWLCRLDGDQSLASLSFNLARQSNRTMQANLVLTARSIEALDQSLADFENGNDGSFIERTPASSQPTVILCFGGQVSCFVGLDKQVYQDMALVRYYLDRVDAVIQCQGGRSIFPGIFNRSPPSKVDIVHLHTMLFAMQYASARCWIDSGVKPAALVGHSFGTLTALCISGILSLEDTIKAIMCRAKLLNEAWGPDQGGMIAVEGDIDVIEELLDEANKNHDDKPATIACYNGPTSFTLAGSTTAMDAVAAQLKNGAKYSKGMKSKRIYVTHAFHSVLVDPLLEELTQRVADSGVRFRKPIIPVELSTEQHMSESELTSEFMANHMRQPVYFHHAVERLARRYAGGSSPCVFLEAGTNSSVCNMASRALGSTEFVTKSSSLSFHGVNIANCDAGWNKLTDTTVNLWETGVRVHHWAHHGVQQMHQTDIKPLLVPPYQFDPDSRHWIDLKVPRKALMETDEADAGGKKQSDAEKLPETILTFHSSDAVGAQKQARFRVNTMLEEYKQLLRGHMTLETAPILSATLQINLVIEAISSTQPEYKSSKSQPQIQDVVYQSPVCFNSANTLWVEVTNVSGQWMFQVFSTTTQELSPKSTRMVHTKGTVAFKNPGDAEIRRQLMSYERLFSHGRATDLLQNSNASTAPIDEMLGNQSIYRIFSEIVSYGPEFRGLQKMVSRGNETAGHVVHLKHQDSASTEAEPWFDPHLADTFCQLGGLWVNCMMPERERGNGHVYLANGIDQWIRGYPAASTDRPEAFNVFAVNKQASEQLTLTDVFVFNAADGALVEVILGIAYVKIARPSMEKLLARLTEPSWVAGGKTTPQTATKPAAAPVVADHTPRTTESASTVNGVNLDDRKPEGTALPQEMLSDTEELRPKAQGQELQDMIARVKAVMADISGLDISEIKDDSNLADLGIDSLVGMEMTHEIESTLKVELPESEIMSVVDMEGLLQCVAGALGLSMTGASSDTLTASSDSGINSAKSSILSGTSTSTSTGTTDTGSDVGQSMKEPSLMLDTVKKAFAQTKEATDARIKAASNQVSYCSTSLPQQNELSVLLTITALEALGAGFSTARPGSQLTRISHAPGHEQFVTHLYKEIETATQIIKIDGHGAQAVITRTAVPLPDVESRQVALCEQMLRGDPEQVGTMELIKHAGENLHRVLSGETDGAKVIFGSKTGSKLVSQWYAQWPLNRSLIAQMGDFLTAVVAGIQADEDMPFSEINPLRIMETGAGTGGTTKQIVPLLARLGLPVVYTFTDLAPSFVAAARKTWGKEYPWMQFRTLDMEKTPPSVEDGLPLQHFIVSANAVHATKSISATTGNLRKALRTDGFLLMMEMTRTPFWVDLIFGLFEGWWLFEDGRKHALTHEALWDQELSKVGFGYVDWTEGMTAESEIQKIILASADANTRLERVRLPASHTDYHLNQVGVENEARELMVADYVSTLTKEFNKTMTQYTDAGLSLSSRTSQTPMSSQKRCILITGGTGGLGAHLVAEAALLPDVNMVICLNRPNRKQEARERQLVSLEKKGLILSPEALAKITVFETDLSQPGSLGLSDDKYNLLRGNVTHIIHNAWLMHSKWPVRRFEPQLRIMAHMLNLAADIATCQRTQGQRQPGPPVSFVFVSSIATVGYHPVVTNPGNPAVPETRIPISSVLPTGYGEAKYICERMLDATLHQYPAQFRASAVRLGQIAGSEINGHWNSAEHISFLVKSSQSIGALPALPGPMGWTPADYVARGLVEIATQPDNIELYPIYHIENPVRQPWDEALAVLADEMGISSEALPFQEWVQTVRDWPRQGDNTAAGANPAYLLVDFLEDHFLRMSCGGLLLGTAKAREHSPSLAGMGPVSDELLRLFVRSWKEVGFLL.

Residues 99-238 (LPAALLIPLA…GTISNLTRQL (140 aa)) form an N-terminal acylcarrier protein transacylase domain (SAT) region. The span at 361–373 (SLASTVDINSGNG) shows a compositional bias: polar residues. The segment at 361 to 391 (SLASTVDINSGNGKTRRVKPADAQSSANSTH) is disordered. The region spanning 397-828 (DTDIAIVGMS…GSNASAVLVQ (432 aa)) is the Ketosynthase family 3 (KS3) domain. Catalysis depends on for beta-ketoacyl synthase activity residues C571, H706, and H748. Residues 942–1230 (FGGQVSCFVG…FLEAGTNSSV (289 aa)) form a malonyl-CoA:ACP transacylase (MAT) domain region. S1029 acts as the For acyl/malonyl transferase activity in catalysis. The segment at 1345 to 1479 (ETILTFHSSD…GTVAFKNPGD (135 aa)) is N-terminal hotdog fold. A PKS/mFAS DH domain is found at 1345–1669 (ETILTFHSSD…YVKIARPSME (325 aa)). The interval 1374–1665 (KQLLRGHMTL…LGIAYVKIAR (292 aa)) is product template (PT) domain. H1380 serves as the catalytic Proton acceptor; for dehydratase activity. The C-terminal hotdog fold stretch occupies residues 1513–1669 (DEMLGNQSIY…YVKIARPSME (157 aa)). Residue D1575 is the Proton donor; for dehydratase activity of the active site. The segment covering 1682 to 1701 (AGGKTTPQTATKPAAAPVVA) has biased composition (low complexity). Residues 1682–1726 (AGGKTTPQTATKPAAAPVVADHTPRTTESASTVNGVNLDDRKPEG) are disordered. Residues 1707–1716 (TTESASTVNG) show a composition bias toward polar residues. One can recognise a Carrier domain in the interval 1750-1824 (QDMIARVKAV…GLLQCVAGAL (75 aa)). Position 1784 is an O-(pantetheine 4'-phosphoryl)serine (S1784). Positions 1835–1868 (TLTASSDSGINSAKSSILSGTSTSTSTGTTDTGS) are enriched in low complexity. Positions 1835–1874 (TLTASSDSGINSAKSSILSGTSTSTSTGTTDTGSDVGQSM) are disordered. Positions 2086-2254 (EINPLRIMET…GYVDWTEGMT (169 aa)) are methyltransferase (C-MeT) domain. Positions 2344 to 2599 (ITGGTGGLGA…GWTPADYVAR (256 aa)) are reductase (R) domain.

It participates in secondary metabolite biosynthesis; terpenoid biosynthesis. In terms of biological role, non-reducing polyketide synthase; part of the gene cluster that mediates the biosynthesis of xenovulene A, an unusual meroterpenoid that has potent inhibitory effects on the human gamma-aminobutyrate A (GABAA) benzodiazepine receptor. The first step of xenovulene A biosynthesis is the biosynthesis of 3-methylorcinaldehyde performed by the non-reducing polyketide synthase aspks1. The salicylate hydroxylase asL1 then catalyzes the oxidative dearomatization of 3-methylorcinaldehyde to yield a dearomatized hydroxycyclohexadione. The 2-oxoglutarate-dependent dioxygenase asL3 further catalyzes the oxidative ring expansion to provide the first tropolone metabolite. The cytochrome P450 monooxygenase asR2 allows the synthesis of tropolone hemiacetal. In parallel, a previously unrecognised class of terpene cyclase, asR6, produces alpha-humulene from farnesylpyrophosphate (FPP). The putative Diels-Alderase asR5 probably catalyzes the formation of the tropolone-humulene skeleton by linking humulene and the polyketide moiety. Oxidative-ring contractions catalyzed by asL4 and asL6 then processively remove carbon atoms from the polyketide to yield xenovulene A. The polypeptide is 3-methylorcinaldehyde synthase (Sarocladium schorii (Acremonium strictum (strain IMI 501407))).